A 114-amino-acid polypeptide reads, in one-letter code: Large ribosomal subunit protein uL24 (114 aa).

It belongs to the universal ribosomal protein uL24 family. As to quaternary structure, part of the 50S ribosomal subunit.

One of two assembly initiator proteins, it binds directly to the 5'-end of the 23S rRNA, where it nucleates assembly of the 50S subunit. Its function is as follows. One of the proteins that surrounds the polypeptide exit tunnel on the outside of the subunit. The chain is Large ribosomal subunit protein uL24 from Acidothermus cellulolyticus (strain ATCC 43068 / DSM 8971 / 11B).